The chain runs to 179 residues: Sec-independent protein translocase protein TatB (179 aa).

Residues 1-21 form a helical membrane-spanning segment; sequence MLDLGLSKMALIGVVALVVLG. The span at 101–115 shows a compositional bias: low complexity; sequence GAAGDAGSVGSPGSD. Residues 101–134 form a disordered region; that stretch reads GAAGDAGSVGSPGSDTPAAPSWRGSSAALAPKRR.

It belongs to the TatB family. As to quaternary structure, the Tat system comprises two distinct complexes: a TatABC complex, containing multiple copies of TatA, TatB and TatC subunits, and a separate TatA complex, containing only TatA subunits. Substrates initially bind to the TatABC complex, which probably triggers association of the separate TatA complex to form the active translocon.

It localises to the cell inner membrane. Part of the twin-arginine translocation (Tat) system that transports large folded proteins containing a characteristic twin-arginine motif in their signal peptide across membranes. Together with TatC, TatB is part of a receptor directly interacting with Tat signal peptides. TatB may form an oligomeric binding site that transiently accommodates folded Tat precursor proteins before their translocation. This is Sec-independent protein translocase protein TatB from Burkholderia orbicola (strain AU 1054).